The chain runs to 463 residues: ATP-dependent protease ATPase subunit HslU (463 aa).

ATP-binding positions include isoleucine 19, 61 to 66, aspartate 277, glutamate 341, and arginine 413; that span reads GVGKTE.

Belongs to the ClpX chaperone family. HslU subfamily. As to quaternary structure, a double ring-shaped homohexamer of HslV is capped on each side by a ring-shaped HslU homohexamer. The assembly of the HslU/HslV complex is dependent on binding of ATP.

It is found in the cytoplasm. Functionally, ATPase subunit of a proteasome-like degradation complex; this subunit has chaperone activity. The binding of ATP and its subsequent hydrolysis by HslU are essential for unfolding of protein substrates subsequently hydrolyzed by HslV. HslU recognizes the N-terminal part of its protein substrates and unfolds these before they are guided to HslV for hydrolysis. The polypeptide is ATP-dependent protease ATPase subunit HslU (Bacillus cereus (strain AH187)).